We begin with the raw amino-acid sequence, 183 residues long: Bifunctional protein PyrR (183 aa).

A PRPP-binding motif is present at residues 102-114 (VVLVDDVLFSGRT).

This sequence belongs to the purine/pyrimidine phosphoribosyltransferase family. PyrR subfamily.

It carries out the reaction UMP + diphosphate = 5-phospho-alpha-D-ribose 1-diphosphate + uracil. Its function is as follows. Regulates the transcription of the pyrimidine nucleotide (pyr) operon in response to exogenous pyrimidines. Also displays a weak uracil phosphoribosyltransferase activity which is not physiologically significant. In Leifsonia xyli subsp. xyli (strain CTCB07), this protein is Bifunctional protein PyrR.